The chain runs to 368 residues: p21-activated protein kinase-interacting protein 1-like (368 aa).

5 WD repeats span residues Ala45–Ala82, His85–Thr123, Ala126–Ile165, Ala207–Glu245, and Ala248–Pro289.

It localises to the nucleus. The protein localises to the nucleolus. In terms of biological role, negatively regulates the PAK1 kinase. PAK1 is a member of the PAK kinase family, which has been shown to play a positive role in the regulation of signaling pathways involving MAPK8 and RELA. PAK1 exists as an inactive homodimer, which is activated by binding of small GTPases such as CDC42 to an N-terminal regulatory domain. PAK1IP1 also binds to the N-terminus of PAK1, and inhibits the specific activation of PAK1 by CDC42. May be involved in ribosomal large subunit assembly. The protein is p21-activated protein kinase-interacting protein 1-like (pak1ip1) of Danio rerio (Zebrafish).